The sequence spans 466 residues: VGFKAGVKEYKLTYYTPEYETKDTDILAAFRVTPQPGVPPEEAGAAVAAESSTGTWTTVWTDGLTSLDRYKGRCYNIEPVPGETDQYICYVAYPLDLFEEGSVTNMFTSIVGNVFGFKALRALRLEDLRIPPAYIKTFQGPPHGIQVERDKLNKYGRPLLGCTIKPKLGLSAKNYGRAVYECLRGGLDFTKDDENVNSQPFMRWRDRFLFCAEAIYKSQAETGEIKGHYLNATAGTCEEMIKRAVFARELGVPIVMHDYLTGGFTANTSLAHYCRDNGLLLHIHRAMHAVIDRQKNHGIHFRVLAKALRMSGGDHIHSGTVVGKLEGERDITLGFVDLLRDDFIEEDRSRGIYFTQDWVSLPGVLPVASGGIHVWHMPALTEIFGDDSVLQFGGGTLGHPWGNAPGAVANRVALEACVQARNEGRDLAAEGNAIIREASKWSPELAAACEVWKEIKFEFKAVDTLD.

Residue lysine 4 is modified to N6,N6,N6-trimethyllysine. Residues asparagine 113 and threonine 163 each coordinate substrate. The active-site Proton acceptor is the lysine 165. Lysine 167 lines the substrate pocket. Mg(2+) is bound by residues lysine 191, aspartate 193, and glutamate 194. Lysine 191 carries the post-translational modification N6-carboxylysine. Residue histidine 284 is the Proton acceptor of the active site. Positions 285, 317, and 369 each coordinate substrate.

It belongs to the RuBisCO large chain family. Type I subfamily. In terms of assembly, heterohexadecamer of 8 large chains and 8 small chains; disulfide-linked. The disulfide link is formed within the large subunit homodimers. It depends on Mg(2+) as a cofactor. The disulfide bond which can form in the large chain dimeric partners within the hexadecamer appears to be associated with oxidative stress and protein turnover.

It is found in the plastid. It localises to the chloroplast. It carries out the reaction 2 (2R)-3-phosphoglycerate + 2 H(+) = D-ribulose 1,5-bisphosphate + CO2 + H2O. It catalyses the reaction D-ribulose 1,5-bisphosphate + O2 = 2-phosphoglycolate + (2R)-3-phosphoglycerate + 2 H(+). Functionally, ruBisCO catalyzes two reactions: the carboxylation of D-ribulose 1,5-bisphosphate, the primary event in carbon dioxide fixation, as well as the oxidative fragmentation of the pentose substrate in the photorespiration process. Both reactions occur simultaneously and in competition at the same active site. In Pinguicula caerulea (Blueflower butterwort), this protein is Ribulose bisphosphate carboxylase large chain.